The sequence spans 232 residues: Ornithine carbamoyltransferase (232 aa).

Residues Q15, R39, and 66 to 69 each bind carbamoyl phosphate; that span reads HPTQ. Residues N99, D163, and 167-168 contribute to the L-ornithine site; that span reads SM. Residues 204–207 and T232 each bind carbamoyl phosphate; that span reads HCLP.

The protein belongs to the aspartate/ornithine carbamoyltransferase superfamily. OTCase family.

It is found in the cytoplasm. It carries out the reaction carbamoyl phosphate + L-ornithine = L-citrulline + phosphate + H(+). Its pathway is amino-acid biosynthesis; L-arginine biosynthesis; L-arginine from L-ornithine and carbamoyl phosphate: step 1/3. Functionally, reversibly catalyzes the transfer of the carbamoyl group from carbamoyl phosphate (CP) to the N(epsilon) atom of ornithine (ORN) to produce L-citrulline. The polypeptide is Ornithine carbamoyltransferase (argF) (Neisseria flava).